The primary structure comprises 570 residues: Glucan 1,3-beta-glucosidase 2 (570 aa).

Residues Asn91, Asn116, Asn121, Asn184, Asn203, and Asn248 are each glycosylated (N-linked (GlcNAc...) asparagine). Glu338 functions as the Proton donor in the catalytic mechanism. N-linked (GlcNAc...) asparagine glycosylation occurs at Asn364. The active-site Nucleophile is the Glu439. Residues Asn525 and Asn552 are each glycosylated (N-linked (GlcNAc...) asparagine).

Belongs to the glycosyl hydrolase 5 (cellulase A) family.

Its subcellular location is the secreted. It carries out the reaction Successive hydrolysis of beta-D-glucose units from the non-reducing ends of (1-&gt;3)-beta-D-glucans, releasing alpha-glucose.. This Schizosaccharomyces pombe (strain 972 / ATCC 24843) (Fission yeast) protein is Glucan 1,3-beta-glucosidase 2 (exg2).